We begin with the raw amino-acid sequence, 658 residues long: Putative arrestin-related trafficking adapter C2D10.04 (658 aa).

2 disordered regions span residues 21 to 107 and 638 to 658; these read LHHQ…LTWS and REEA…EIPR. Residues 39–81 show a composition bias toward low complexity; it reads NRSSNSGLNRRNSVFGLPSSGLSSRLSKPSLSSINNSNNSSSN. Residues 96 to 107 are compositionally biased toward polar residues; it reads RNMSNKPPLTWS. Ser-653 carries the phosphoserine modification.

It belongs to the ALY1 family.

The protein localises to the cytoplasm. May regulate endocytosis in response to extracellular stimuli. This is Putative arrestin-related trafficking adapter C2D10.04 from Schizosaccharomyces pombe (strain 972 / ATCC 24843) (Fission yeast).